The chain runs to 282 residues: NADPH-dependent 7-cyano-7-deazaguanine reductase (282 aa).

88–90 (IES) serves as a coordination point for substrate. NADPH is bound at residue 90 to 91 (SK). Residue C190 is the Thioimide intermediate of the active site. D197 serves as the catalytic Proton donor. 229–230 (HE) is a substrate binding site. 258 to 259 (RG) serves as a coordination point for NADPH.

It belongs to the GTP cyclohydrolase I family. QueF type 2 subfamily. As to quaternary structure, homodimer.

It localises to the cytoplasm. The catalysed reaction is 7-aminomethyl-7-carbaguanine + 2 NADP(+) = 7-cyano-7-deazaguanine + 2 NADPH + 3 H(+). The protein operates within tRNA modification; tRNA-queuosine biosynthesis. Catalyzes the NADPH-dependent reduction of 7-cyano-7-deazaguanine (preQ0) to 7-aminomethyl-7-deazaguanine (preQ1). The polypeptide is NADPH-dependent 7-cyano-7-deazaguanine reductase (Escherichia coli O9:H4 (strain HS)).